A 249-amino-acid polypeptide reads, in one-letter code: Segregation and condensation protein A (249 aa).

This sequence belongs to the ScpA family. As to quaternary structure, component of a cohesin-like complex composed of ScpA, ScpB and the Smc homodimer, in which ScpA and ScpB bind to the head domain of Smc. The presence of the three proteins is required for the association of the complex with DNA.

The protein resides in the cytoplasm. Participates in chromosomal partition during cell division. May act via the formation of a condensin-like complex containing Smc and ScpB that pull DNA away from mid-cell into both cell halves. The sequence is that of Segregation and condensation protein A from Mycoplasmopsis pulmonis (strain UAB CTIP) (Mycoplasma pulmonis).